The chain runs to 538 residues: ATP-dependent rRNA helicase RRP3 (538 aa).

The segment covering 1–11 (MSSAKRVKLSH) has biased composition (basic residues). The interval 1–112 (MSSAKRVKLS…SKEETPTKSF (112 aa)) is disordered. Over residues 34-47 (KKITQAPKAAAPIK) the composition is skewed to low complexity. Acidic residues predominate over residues 53 to 85 (AEEDDDDDDKDDKDEEDEEQNDDSSDEASENDD). Basic and acidic residues predominate over residues 92 to 112 (EATKEGQTELPSKEETPTKSF). Residues 110–138 (KSFRDLGIVEPLCEACEALKFKKPTPIQE) carry the Q motif motif. In terms of domain architecture, Helicase ATP-binding spans 141-312 (IPLALQGRDV…RASLRDPLKV (172 aa)). 154–161 (AETGSGKT) lines the ATP pocket. A DEAD box motif is present at residues 260 to 263 (DEAD). Positions 336 to 486 (HKDVYLIYLA…LFQPDKEEVM (151 aa)) constitute a Helicase C-terminal domain. Over residues 498 to 512 (HAREEMKALHEDRGK) the composition is skewed to basic and acidic residues. The segment at 498-538 (HAREEMKALHEDRGKKGAVLKGRKRGSATKRRHDDMDAEEG) is disordered. Basic residues predominate over residues 513-528 (KGAVLKGRKRGSATKR).

This sequence belongs to the DEAD box helicase family. DDX47/RRP3 subfamily. Interacts with the SSU processome.

The protein resides in the nucleus. The catalysed reaction is ATP + H2O = ADP + phosphate + H(+). Its function is as follows. ATP-dependent rRNA helicase required for pre-ribosomal RNA processing. Involved in the maturation of the 35S-pre-rRNA and to its cleavage to mature 18S rRNA. This is ATP-dependent rRNA helicase RRP3 from Pyricularia oryzae (strain 70-15 / ATCC MYA-4617 / FGSC 8958) (Rice blast fungus).